We begin with the raw amino-acid sequence, 365 residues long: ATP-dependent (S)-NAD(P)H-hydrate dehydratase (365 aa).

A chloroplast-targeting transit peptide spans 1–43 (MLVKPSIISGLVRLTSHSPSSSSSVLRRQEFLVRTLCGSPIIR). Leu-2 is modified (N-acetylserine). The YjeF C-terminal domain maps to 53 to 361 (AESVLRTVTP…ECLGESLEDI (309 aa)). (6S)-NADPHX-binding positions include Gly-169 and 222-228 (NVNEYKR). ATP contacts are provided by residues 262-266 (KGKSD) and 281-290 (GSPRRCGGQG). Asp-291 provides a ligand contact to (6S)-NADPHX.

The protein belongs to the NnrD/CARKD family. Requires Mg(2+) as cofactor.

Its subcellular location is the plastid. It is found in the chloroplast. The protein resides in the cytoplasm. The enzyme catalyses (6S)-NADHX + ATP = ADP + phosphate + NADH + H(+). It carries out the reaction (6S)-NADPHX + ATP = ADP + phosphate + NADPH + H(+). In terms of biological role, catalyzes the dehydration of the S-form of NAD(P)HX at the expense of ATP, which is converted to ADP. Together with NAD(P)HX epimerase, which catalyzes the epimerization of the S- and R-forms, the enzyme allows the repair of both epimers of NAD(P)HX, a damaged form of NAD(P)H that is a result of enzymatic or heat-dependent hydration. This is ATP-dependent (S)-NAD(P)H-hydrate dehydratase from Arabidopsis thaliana (Mouse-ear cress).